We begin with the raw amino-acid sequence, 345 residues long: L-threonine 3-dehydrogenase (345 aa).

Cysteine 42 lines the Zn(2+) pocket. Residues threonine 44 and histidine 47 each act as charge relay system in the active site. Positions 67, 68, 97, 100, 103, and 111 each coordinate Zn(2+). Residues isoleucine 179, aspartate 199, arginine 204, leucine 266–isoleucine 268, and isoleucine 290–tyrosine 291 contribute to the NAD(+) site.

This sequence belongs to the zinc-containing alcohol dehydrogenase family. Homotetramer. Zn(2+) serves as cofactor.

It localises to the cytoplasm. The enzyme catalyses L-threonine + NAD(+) = (2S)-2-amino-3-oxobutanoate + NADH + H(+). Its pathway is amino-acid degradation; L-threonine degradation via oxydo-reductase pathway; glycine from L-threonine: step 1/2. Its function is as follows. Catalyzes the NAD(+)-dependent oxidation of L-threonine to 2-amino-3-ketobutyrate. The protein is L-threonine 3-dehydrogenase of Rhizobium etli (strain ATCC 51251 / DSM 11541 / JCM 21823 / NBRC 15573 / CFN 42).